The sequence spans 262 residues: Tetratricopeptide repeat protein 33 (262 aa).

TPR repeat units follow at residues 59–92 (SKQL…TPND), 93–126 (ATLY…NPHS), and 127–160 (WESW…YPMN). The residue at position 197 (Ser-197) is a Phosphoserine. Thr-251 is subject to Phosphothreonine.

The sequence is that of Tetratricopeptide repeat protein 33 (TTC33) from Homo sapiens (Human).